We begin with the raw amino-acid sequence, 260 residues long: PHD finger protein ALFIN-LIKE 5 (260 aa).

Methionine 1 is modified (N-acetylmethionine). The tract at residues alanine 142–glycine 203 is disordered. The segment covering glutamate 148 to lysine 165 has biased composition (polar residues). Basic and acidic residues predominate over residues arginine 167–aspartate 181. Residues glutamate 182–histidine 202 show a composition bias toward acidic residues. The PHD-type zinc finger occupies glutamate 204–lysine 256.

It belongs to the Alfin family. In terms of assembly, interacts with H3K4me3 and to a lesser extent with H3K4me2. Ubiquitously expressed.

The protein resides in the nucleus. Histone-binding component that specifically recognizes H3 tails trimethylated on 'Lys-4' (H3K4me3), which mark transcription start sites of virtually all active genes. The polypeptide is PHD finger protein ALFIN-LIKE 5 (AL5) (Arabidopsis thaliana (Mouse-ear cress)).